Reading from the N-terminus, the 136-residue chain is MARTKQTARKSTGGKAPRKQLATKAARKSAPATGGVKKPHRYRPGTVALREIRRYQKSTELLIRKLPFQRLVREIAQDFKTDLRFQSSAVMALQEACEAYLVGLFEDTNLCAIHAKRVTIMPKDIQLARRIRGERA.

Residues 1–43 are disordered; the sequence is MARTKQTARKSTGGKAPRKQLATKAARKSAPATGGVKKPHRYR. Position 3 is an asymmetric dimethylarginine; by PRMT6; alternate (Arg-3). Residue Arg-3 is modified to Citrulline; alternate. Thr-4 is subject to Phosphothreonine; by HASPIN and VRK1. An Allysine; alternate modification is found at Lys-5. Lys-5 is subject to N6,N6,N6-trimethyllysine; alternate. Lys-5 carries the post-translational modification N6,N6-dimethyllysine; alternate. Lys-5 carries the post-translational modification N6-(2-hydroxyisobutyryl)lysine; alternate. The residue at position 5 (Lys-5) is an N6-(beta-hydroxybutyryl)lysine; alternate. Lys-5 carries the N6-acetyllysine; alternate modification. N6-crotonyllysine; alternate is present on Lys-5. Position 5 is an N6-methyllysine; alternate (Lys-5). Gln-6 is subject to 5-glutamyl dopamine; alternate. Gln-6 is subject to 5-glutamyl serotonin; alternate. Thr-7 bears the Phosphothreonine; by PKC mark. A Citrulline; alternate modification is found at Arg-9. Arg-9 carries the post-translational modification Symmetric dimethylarginine; by PRMT5; alternate. Lys-10 carries the N6,N6,N6-trimethyllysine; alternate modification. At Lys-10 the chain carries N6,N6-dimethyllysine; alternate. Position 10 is an N6-(2-hydroxyisobutyryl)lysine; alternate (Lys-10). The residue at position 10 (Lys-10) is an N6-(beta-hydroxybutyryl)lysine; alternate. The residue at position 10 (Lys-10) is an N6-acetyllysine; alternate. Lys-10 carries the post-translational modification N6-crotonyllysine; alternate. At Lys-10 the chain carries N6-methyllysine; alternate. Lys-10 is subject to N6-butyryllysine; alternate. At Lys-10 the chain carries N6-lactoyllysine; alternate. Ser-11 is subject to ADP-ribosylserine; alternate. Position 11 is a phosphoserine; alternate; by AURKB, AURKC, RPS6KA3, RPS6KA4 and RPS6KA5 (Ser-11). Thr-12 carries the phosphothreonine; by PKC and CHEK1 modification. Lys-15 bears the N6-(2-hydroxyisobutyryl)lysine; alternate mark. Lys-15 carries the post-translational modification N6-(beta-hydroxybutyryl)lysine; alternate. The residue at position 15 (Lys-15) is an N6-acetyllysine; alternate. Position 15 is an N6-lactoyllysine; alternate (Lys-15). The residue at position 15 (Lys-15) is an N6-glutaryllysine; alternate. Residue Lys-15 is modified to N6-succinyllysine; alternate. Arg-18 is modified (citrulline; alternate). Arg-18 carries the post-translational modification Asymmetric dimethylarginine; by CARM1; alternate. 2 positions are modified to N6-(2-hydroxyisobutyryl)lysine; alternate: Lys-19 and Lys-24. N6-(beta-hydroxybutyryl)lysine; alternate occurs at positions 19 and 24. 2 positions are modified to N6-acetyllysine; alternate: Lys-19 and Lys-24. N6-crotonyllysine; alternate occurs at positions 19 and 24. N6-methyllysine; alternate occurs at positions 19 and 24. N6-butyryllysine; alternate occurs at positions 19 and 24. Lys-19 and Lys-24 each carry N6-lactoyllysine; alternate. 2 positions are modified to N6-glutaryllysine; alternate: Lys-19 and Lys-24. Residue Lys-19 is the site of N6-decanoyllysine attachment. Arg-27 is modified (citrulline). Lys-28 carries the post-translational modification N6,N6,N6-trimethyllysine; alternate. Lys-28 is modified (N6,N6-dimethyllysine; alternate). At Lys-28 the chain carries N6-(2-hydroxyisobutyryl)lysine; alternate. Lys-28 carries the post-translational modification N6-(beta-hydroxybutyryl)lysine; alternate. Lys-28 bears the N6-acetyllysine; alternate mark. Lys-28 carries the N6-crotonyllysine; alternate modification. Position 28 is an N6-methyllysine; alternate (Lys-28). The residue at position 28 (Lys-28) is an N6-lactoyllysine; alternate. Residue Lys-28 is modified to N6-glutaryllysine; alternate. Ser-29 carries the ADP-ribosylserine; alternate modification. A Phosphoserine; alternate; by AURKB, AURKC and RPS6KA5 modification is found at Ser-29. Lys-37 carries the post-translational modification N6,N6,N6-trimethyllysine; alternate. N6,N6-dimethyllysine; alternate is present on Lys-37. Lys-37 carries the post-translational modification N6-(2-hydroxyisobutyryl)lysine; alternate. Lys-37 is subject to N6-acetyllysine; alternate. Lys-37 is subject to N6-methyllysine; alternate. Lys-38 carries the post-translational modification N6-methyllysine. Position 42 is a phosphotyrosine (Tyr-42). Lys-57 is subject to N6,N6,N6-trimethyllysine; alternate. At Lys-57 the chain carries N6-(2-hydroxyisobutyryl)lysine; alternate. Position 57 is an N6-(beta-hydroxybutyryl)lysine; alternate (Lys-57). Position 57 is an N6-acetyllysine; alternate (Lys-57). At Lys-57 the chain carries N6-crotonyllysine; alternate. N6-lactoyllysine; alternate is present on Lys-57. Lys-57 carries the post-translational modification N6-glutaryllysine; alternate. Lys-57 carries the N6-succinyllysine; alternate modification. Lys-57 is modified (N6-methyllysine; by EHMT2; alternate). Ser-58 carries the post-translational modification Phosphoserine. N6-(2-hydroxyisobutyryl)lysine; alternate occurs at positions 65 and 80. 2 positions are modified to N6-methyllysine; alternate: Lys-65 and Lys-80. Lys-80 carries the post-translational modification N6,N6,N6-trimethyllysine; alternate. N6,N6-dimethyllysine; alternate is present on Lys-80. Lys-80 carries the N6-(beta-hydroxybutyryl)lysine; alternate modification. Residue Lys-80 is modified to N6-acetyllysine; alternate. An N6-lactoyllysine; alternate modification is found at Lys-80. Lys-80 is modified (N6-glutaryllysine; alternate). Lys-80 carries the post-translational modification N6-succinyllysine; alternate. A Phosphothreonine modification is found at Thr-81. Ser-87 carries the phosphoserine modification. Phosphothreonine is present on Thr-108. N6-acetyllysine; alternate is present on residues Lys-116 and Lys-123. N6-glutaryllysine; alternate occurs at positions 116 and 123. Lys-123 carries the post-translational modification N6-(2-hydroxyisobutyryl)lysine; alternate. N6-(beta-hydroxybutyryl)lysine; alternate is present on Lys-123. At Lys-123 the chain carries N6-methyllysine; alternate. Position 123 is an N6-succinyllysine; alternate (Lys-123).

It belongs to the histone H3 family. In terms of assembly, the nucleosome is a histone octamer containing two molecules each of H2A, H2B, H3 and H4 assembled in one H3-H4 heterotetramer and two H2A-H2B heterodimers. The octamer wraps approximately 147 bp of DNA. Interacts with TONSL; CHAF1A; CHAF1B; MCM2 and DNAJC9. Interacts with NASP; NASP is a histone chaperone that stabilizes and maintains a soluble pool of Histone H3-H4 dimers. Acetylation is generally linked to gene activation. Acetylation on Lys-10 (H3K9ac) impairs methylation at Arg-9 (H3R8me2s). Acetylation on Lys-19 (H3K18ac) and Lys-24 (H3K24ac) favors methylation at Arg-18 (H3R17me). Acetylation at Lys-123 (H3K122ac) by EP300/p300 plays a central role in chromatin structure: localizes at the surface of the histone octamer and stimulates transcription, possibly by promoting nucleosome instability. In terms of processing, citrullination at Arg-9 (H3R8ci) and/or Arg-18 (H3R17ci) by PADI4 impairs methylation and represses transcription. Post-translationally, asymmetric dimethylation at Arg-18 (H3R17me2a) by CARM1 is linked to gene activation. Symmetric dimethylation at Arg-9 (H3R8me2s) by PRMT5 is linked to gene repression. Asymmetric dimethylation at Arg-3 (H3R2me2a) by PRMT6 is linked to gene repression and is mutually exclusive with H3 Lys-5 methylation (H3K4me2 and H3K4me3). H3R2me2a is present at the 3' of genes regardless of their transcription state and is enriched on inactive promoters, while it is absent on active promoters. Methylation at Lys-5 (H3K4me), Lys-37 (H3K36me) and Lys-80 (H3K79me) are linked to gene activation. Methylation at Lys-5 (H3K4me) facilitates subsequent acetylation of H3 and H4. Methylation at Lys-80 (H3K79me) is associated with DNA double-strand break (DSB) responses and is a specific target for TP53BP1. Methylation at Lys-10 (H3K9me) and Lys-28 (H3K27me) are linked to gene repression. Methylation at Lys-10 (H3K9me) is a specific target for HP1 proteins (CBX1, CBX3 and CBX5) and prevents subsequent phosphorylation at Ser-11 (H3S10ph) and acetylation of H3 and H4. Methylation at Lys-5 (H3K4me) and Lys-80 (H3K79me) require preliminary monoubiquitination of H2B at 'Lys-120'. Methylation at Lys-10 (H3K9me) and Lys-28 (H3K27me) are enriched in inactive X chromosome chromatin. Monomethylation at Lys-57 (H3K56me1) by EHMT2/G9A in G1 phase promotes interaction with PCNA and is required for DNA replication. In terms of processing, phosphorylated at Thr-4 (H3T3ph) by VRK1. Phosphorylated at Thr-4 (H3T3ph) by HASPIN during prophase and dephosphorylated during anaphase. Phosphorylation at Ser-11 (H3S10ph) by AURKB is crucial for chromosome condensation and cell-cycle progression during mitosis and meiosis. In addition phosphorylation at Ser-11 (H3S10ph) by RPS6KA4 and RPS6KA5 is important during interphase because it enables the transcription of genes following external stimulation, like mitogens, stress, growth factors or UV irradiation and result in the activation of genes, such as c-fos and c-jun. Phosphorylation at Ser-11 (H3S10ph), which is linked to gene activation, prevents methylation at Lys-10 (H3K9me) but facilitates acetylation of H3 and H4. Phosphorylation at Ser-11 (H3S10ph) by AURKB mediates the dissociation of HP1 proteins (CBX1, CBX3 and CBX5) from heterochromatin. Phosphorylation at Ser-11 (H3S10ph) is also an essential regulatory mechanism for neoplastic cell transformation. Phosphorylated at Ser-29 (H3S28ph) by MAP3K20 isoform 1, RPS6KA5 or AURKB during mitosis or upon ultraviolet B irradiation. Phosphorylation at Thr-7 (H3T6ph) by PRKCB is a specific tag for epigenetic transcriptional activation that prevents demethylation of Lys-5 (H3K4me) by LSD1/KDM1A. At centromeres, specifically phosphorylated at Thr-12 (H3T11ph) from prophase to early anaphase, by DAPK3 and PKN1. Phosphorylation at Thr-12 (H3T11ph) by PKN1 or isoform M2 of PKM (PKM2) is a specific tag for epigenetic transcriptional activation that promotes demethylation of Lys-10 (H3K9me) by KDM4C/JMJD2C. Phosphorylation at Thr-12 (H3T11ph) by chromatin-associated CHEK1 regulates the transcription of cell cycle regulatory genes by modulating acetylation of Lys-10 (H3K9ac). Phosphorylation at Tyr-42 (H3Y41ph) by JAK2 promotes exclusion of CBX5 (HP1 alpha) from chromatin. Post-translationally, monoubiquitinated by RAG1 in lymphoid cells, monoubiquitination is required for V(D)J recombination. Ubiquitinated by the CUL4-DDB-RBX1 complex in response to ultraviolet irradiation. This may weaken the interaction between histones and DNA and facilitate DNA accessibility to repair proteins. Lysine deamination at Lys-5 (H3K4all) to form allysine is mediated by LOXL2. Allysine formation by LOXL2 only takes place on H3K4me3 and results in gene repression. In terms of processing, crotonylation (Kcr) is specifically present in male germ cells and marks testis-specific genes in post-meiotic cells, including X-linked genes that escape sex chromosome inactivation in haploid cells. Crotonylation marks active promoters and enhancers and confers resistance to transcriptional repressors. It is also associated with post-meiotically activated genes on autosomes. Post-translationally, butyrylation of histones marks active promoters and competes with histone acetylation. It is present during late spermatogenesis. Succinylation at Lys-80 (H3K79succ) by KAT2A takes place with a maximum frequency around the transcription start sites of genes. It gives a specific tag for epigenetic transcription activation. Desuccinylation at Lys-123 (H3K122succ) by SIRT7 in response to DNA damage promotes chromatin condensation and double-strand breaks (DSBs) repair. In terms of processing, serine ADP-ribosylation by PARP1 or PARP2 constitutes the primary form of ADP-ribosylation of proteins in response to DNA damage. Serine ADP-ribosylation at Ser-11 (H3S10ADPr) promotes recruitment of CHD1L. H3S10ADPr is mutually exclusive with phosphorylation at Ser-11 (H3S10ph) and impairs acetylation at Lys-10 (H3K9ac). Post-translationally, serotonylated by TGM2 at Gln-6 (H3Q5ser) during serotonergic neuron differentiation. H3Q5ser is associated with trimethylation of Lys-5 (H3K4me3) and enhances general transcription factor IID (TFIID) complex-binding to H3K4me3, thereby facilitating transcription. Dopaminylated by TGM2 at Gln-6 (H3Q5dop) in ventral tegmental area (VTA) neurons. H3Q5dop mediates neurotransmission-independent role of nuclear dopamine by regulating relapse-related transcriptional plasticity in the reward system. In terms of processing, lactylated in macrophages by EP300/P300 by using lactoyl-CoA directly derived from endogenous or exogenous lactate, leading to stimulates gene transcription.

The protein resides in the nucleus. The protein localises to the chromosome. Core component of nucleosome. Nucleosomes wrap and compact DNA into chromatin, limiting DNA accessibility to the cellular machineries which require DNA as a template. Histones thereby play a central role in transcription regulation, DNA repair, DNA replication and chromosomal stability. DNA accessibility is regulated via a complex set of post-translational modifications of histones, also called histone code, and nucleosome remodeling. This chain is Histone H3.1, found in Homo sapiens (Human).